The following is a 356-amino-acid chain: Ubiquitin-conjugating enzyme E2 variant 3 (356 aa).

The disordered stretch occupies residues 1–83 (MSDQPGTSRP…LEDLHNYHRE (83 aa)). Over residues 18-32 (PTKTATRRRARPIAI) the composition is skewed to polar residues. Positions 63–76 (QPRKTVPKNVPLED) are enriched in basic and acidic residues. The UBC core domain maps to 169 to 324 (DIITEFMNRS…AREFVMKMAG (156 aa)).

This sequence belongs to the ubiquitin-conjugating enzyme family. May interact with pmk-3. As to expression, expressed ubiquitously.

Its subcellular location is the nucleus. The protein localises to the cytoplasm. It localises to the cell projection. The protein resides in the dendrite. It is found in the axon. Its subcellular location is the cilium. Its function is as follows. Possible negative regulator of polyubiquitination. May modulate the activity of the p38 MAP kinase pnk-3. May have a role in axon termination and synaptic transmission at motor and mechanosensory neurons. Plays a role in intraflagellar transport in cilia and cilium length regulation. The protein is Ubiquitin-conjugating enzyme E2 variant 3 of Caenorhabditis elegans.